A 273-amino-acid chain; its full sequence is Ribosomal RNA small subunit methyltransferase A (273 aa).

Asn18, Leu20, Gly45, Glu66, Asp91, and Asn113 together coordinate S-adenosyl-L-methionine.

Belongs to the class I-like SAM-binding methyltransferase superfamily. rRNA adenine N(6)-methyltransferase family. RsmA subfamily.

The protein localises to the cytoplasm. The catalysed reaction is adenosine(1518)/adenosine(1519) in 16S rRNA + 4 S-adenosyl-L-methionine = N(6)-dimethyladenosine(1518)/N(6)-dimethyladenosine(1519) in 16S rRNA + 4 S-adenosyl-L-homocysteine + 4 H(+). Specifically dimethylates two adjacent adenosines (A1518 and A1519) in the loop of a conserved hairpin near the 3'-end of 16S rRNA in the 30S particle. May play a critical role in biogenesis of 30S subunits. The sequence is that of Ribosomal RNA small subunit methyltransferase A from Enterobacter sp. (strain 638).